The chain runs to 132 residues: S-protein homolog 15 (132 aa).

Positions Met1–Ala20 are cleaved as a signal peptide.

It belongs to the plant self-incompatibility (S1) protein family.

The protein resides in the secreted. In Arabidopsis thaliana (Mouse-ear cress), this protein is S-protein homolog 15.